We begin with the raw amino-acid sequence, 101 residues long: UPF0235 protein MmarC5_0538 (101 aa).

The protein belongs to the UPF0235 family.

The protein is UPF0235 protein MmarC5_0538 of Methanococcus maripaludis (strain C5 / ATCC BAA-1333).